The sequence spans 429 residues: Dihydroorotase (429 aa).

Zn(2+) is bound by residues His62 and His64. Substrate contacts are provided by residues His64 to Arg66 and Asn96. The Zn(2+) site is built by Asp154, His181, and His234. Asn280 contacts substrate. Asp307 is a binding site for Zn(2+). Asp307 is an active-site residue. Substrate contacts are provided by residues His311 and Phe325–Gly326.

It belongs to the metallo-dependent hydrolases superfamily. DHOase family. Class I DHOase subfamily. The cofactor is Zn(2+).

The enzyme catalyses (S)-dihydroorotate + H2O = N-carbamoyl-L-aspartate + H(+). It functions in the pathway pyrimidine metabolism; UMP biosynthesis via de novo pathway; (S)-dihydroorotate from bicarbonate: step 3/3. Catalyzes the reversible cyclization of carbamoyl aspartate to dihydroorotate. The polypeptide is Dihydroorotase (Latilactobacillus sakei subsp. sakei (strain 23K) (Lactobacillus sakei subsp. sakei)).